Here is a 609-residue protein sequence, read N- to C-terminus: Adagio protein 1 (609 aa).

Residues 1 to 17 are compositionally biased toward low complexity; that stretch reads MEWDSGSDLSADDASSL. The segment at 1–24 is disordered; that stretch reads MEWDSGSDLSADDASSLADDEEGG. The PAS domain maps to 32–114; the sequence is IPYPVGNLLH…SEIRKCIDEG (83 aa). Cys-82 is subject to S-4a-FMN cysteine. A PAC domain is found at 118-161; the sequence is QGELLNFRKDGSPLMNRLRLTPIYGDDDTITHIIGIQFFIETDI. Residues 195-241 form the F-box domain; sequence CGLFQLSDEVVSMKILSRLTPRDVASVSSVCRRLYVLTKNEDLWRRV. 5 Kelch repeats span residues 292–342, 345–392, 397–445, 450–501, and 516–564; these read SRCN…SSPP, RWGH…SGLA, RSWH…PAAW, RLGH…TGSG, and RLDH…NIPG.

This sequence belongs to the ADAGIO family. As to quaternary structure, interacts with NFXL2. Interacts (via N-terminus) with GI and (via Kelch repeats) with ADO3. Component of an E3 ubiquitin ligase SCF(ADO1) complex composed of SKP1A/ASK1 (or SKP1B/ASK2), CUL1, RBX1 and ADO1. Also interacts with SKP1D/ASK4, SKP1K/ASK11, CRY1, PHYB, APRR1 and APRR5, and probably with SKP1N/ASK14 and SKP1S/ASK19. May be ubiquitinated. Degraded in a proteasome-dependent manner. Post-translationally, FMN binds covalently to cysteine after exposure to blue light and is reversed in the dark. As to expression, ubiquitously expressed with higher levels in cotyledons and leaves.

It is found in the nucleus. The protein resides in the cytoplasm. The protein operates within protein modification; protein ubiquitination. In terms of biological role, component of an E3 ubiquitin ligase complex that plays a central role in blue light-dependent circadian cycles. Acts as a blue light photoreceptor, due to the presence of FMN, that mediates light-regulated protein degradation of critical clock components by targeting them to the proteasome complex. The SCF(ADO1) E3 ubiquitin ligase complex is involved in the regulation of circadian clock-dependent processes including the transition to flowering time, hypocotyl elongation, cotyledons and leaf movement rhythms. APRR1/TOC1 and APRR5, but not 'GIGANTEA', are proteolytic substrates of this ubiquitin ligase complex. Blue light enhances cooperative stabilization of 'GIGANTEA' and ADO1/ZTL, leading to amplification and sharpening of the expression profile of APRR1/TOC1. ADO1/ZTL interacts with ADO3, preventing the interaction of ADO3 with CDF1. The protein is Adagio protein 1 (ADO1) of Arabidopsis thaliana (Mouse-ear cress).